The sequence spans 216 residues: Probable nicotinate-nucleotide adenylyltransferase (216 aa).

Belongs to the NadD family.

It catalyses the reaction nicotinate beta-D-ribonucleotide + ATP + H(+) = deamido-NAD(+) + diphosphate. It functions in the pathway cofactor biosynthesis; NAD(+) biosynthesis; deamido-NAD(+) from nicotinate D-ribonucleotide: step 1/1. Its function is as follows. Catalyzes the reversible adenylation of nicotinate mononucleotide (NaMN) to nicotinic acid adenine dinucleotide (NaAD). The protein is Probable nicotinate-nucleotide adenylyltransferase of Geobacter metallireducens (strain ATCC 53774 / DSM 7210 / GS-15).